A 45-amino-acid polypeptide reads, in one-letter code: Photosystem II reaction center protein K (45 aa).

Positions 1–8 (MTQIFLIG) are excised as a propeptide. Residues 20-40 (IVDVLPIIPVLFLLLAFVWQA) traverse the membrane as a helical segment.

The protein belongs to the PsbK family. In terms of assembly, PSII is composed of 1 copy each of membrane proteins PsbA, PsbB, PsbC, PsbD, PsbE, PsbF, PsbH, PsbI, PsbJ, PsbK, PsbL, PsbM, PsbT, PsbX, PsbY, PsbZ, Psb30/Ycf12, at least 3 peripheral proteins of the oxygen-evolving complex and a large number of cofactors. It forms dimeric complexes.

The protein localises to the plastid. Its subcellular location is the chloroplast thylakoid membrane. In terms of biological role, one of the components of the core complex of photosystem II (PSII). PSII is a light-driven water:plastoquinone oxidoreductase that uses light energy to abstract electrons from H(2)O, generating O(2) and a proton gradient subsequently used for ATP formation. It consists of a core antenna complex that captures photons, and an electron transfer chain that converts photonic excitation into a charge separation. This Ostreococcus tauri protein is Photosystem II reaction center protein K.